We begin with the raw amino-acid sequence, 385 residues long: 1-deoxy-D-xylulose 5-phosphate reductoisomerase 1 (385 aa).

T11, G12, S13, I14, N39, and N122 together coordinate NADPH. K123 contributes to the 1-deoxy-D-xylulose 5-phosphate binding site. An NADPH-binding site is contributed by E124. D148 is a Mn(2+) binding site. Positions 149, 150, 174, and 197 each coordinate 1-deoxy-D-xylulose 5-phosphate. E150 is a Mn(2+) binding site. Residue G203 participates in NADPH binding. Residues S210, N215, K216, and E219 each contribute to the 1-deoxy-D-xylulose 5-phosphate site. Residue E219 participates in Mn(2+) binding.

It belongs to the DXR family. It depends on Mg(2+) as a cofactor. The cofactor is Mn(2+).

It catalyses the reaction 2-C-methyl-D-erythritol 4-phosphate + NADP(+) = 1-deoxy-D-xylulose 5-phosphate + NADPH + H(+). The protein operates within isoprenoid biosynthesis; isopentenyl diphosphate biosynthesis via DXP pathway; isopentenyl diphosphate from 1-deoxy-D-xylulose 5-phosphate: step 1/6. Catalyzes the NADPH-dependent rearrangement and reduction of 1-deoxy-D-xylulose-5-phosphate (DXP) to 2-C-methyl-D-erythritol 4-phosphate (MEP). This Bacillus cereus (strain ATCC 14579 / DSM 31 / CCUG 7414 / JCM 2152 / NBRC 15305 / NCIMB 9373 / NCTC 2599 / NRRL B-3711) protein is 1-deoxy-D-xylulose 5-phosphate reductoisomerase 1.